A 444-amino-acid chain; its full sequence is UDP-N-acetylmuramoylalanine--D-glutamate ligase (444 aa).

113-119 is an ATP binding site; that stretch reads GSNGKST.

It belongs to the MurCDEF family.

The protein resides in the cytoplasm. It catalyses the reaction UDP-N-acetyl-alpha-D-muramoyl-L-alanine + D-glutamate + ATP = UDP-N-acetyl-alpha-D-muramoyl-L-alanyl-D-glutamate + ADP + phosphate + H(+). It participates in cell wall biogenesis; peptidoglycan biosynthesis. In terms of biological role, cell wall formation. Catalyzes the addition of glutamate to the nucleotide precursor UDP-N-acetylmuramoyl-L-alanine (UMA). The sequence is that of UDP-N-acetylmuramoylalanine--D-glutamate ligase from Blochmanniella floridana.